Reading from the N-terminus, the 362-residue chain is Peptide chain release factor 1 (362 aa).

The residue at position 237 (Gln237) is an N5-methylglutamine.

It belongs to the prokaryotic/mitochondrial release factor family. Post-translationally, methylated by PrmC. Methylation increases the termination efficiency of RF1.

The protein resides in the cytoplasm. In terms of biological role, peptide chain release factor 1 directs the termination of translation in response to the peptide chain termination codons UAG and UAA. The sequence is that of Peptide chain release factor 1 from Aliivibrio salmonicida (strain LFI1238) (Vibrio salmonicida (strain LFI1238)).